We begin with the raw amino-acid sequence, 268 residues long: Lipase 1 (268 aa).

An N-terminal signal peptide occupies residues 1-29 (MRRFRLVGFLSSLVLAAGAALTGAATAQA). S44 (nucleophile) is an active-site residue. Disulfide bonds link C61–C86, C127–C135, and C185–C231. The active site involves H250.

Belongs to the 'GDSL' lipolytic enzyme family. In terms of assembly, monomer.

It localises to the secreted. It carries out the reaction a triacylglycerol + H2O = a diacylglycerol + a fatty acid + H(+). Its activity is regulated as follows. Strongly inhibited by Ag(+). The cations Ca(2+), Mg(2+), Co(2+) and Cu(2+) do not significantly reduce the lipolytic activity of SCO1725. Is also inhibited by DTT in vitro, but not by EDTA or by the reagent masking SH-groups, p-hydroxymercuribenzoate (pHMB). Is resistant to PMSF inhibition, except in the presence of Ca(2+). Is also strongly inhibited by 3,4-dichloroisocoumarin (DCI), another inhibitor of serine hydrolases. Addition of tetrahydrofuran and 1,4-dioxane significantly increases (2- and 4- fold, respectively) hydrolytic activity of lipase towards p-nitrophenyl caprylate. Functionally, catalyzes the hydrolysis of fatty acid esters with a preference for mid-length acyl chain (C10-C16). Is able to hydrolyze the triacylglycerol triolein and mixed triacylglycerols from a wide range of natural oils; better activity is obtained with corn-, wheat germ- and olive oil that have higher content of linoleic and/or oleic acid (C18:2; C18:1, cis). Tween detergents are also substrates for this enzyme. Displays arylesterase activity towards p-nitrophenyl alkanoate esters and alpha- and beta-naphthyl esters. This Streptomyces coelicolor (strain ATCC BAA-471 / A3(2) / M145) protein is Lipase 1.